We begin with the raw amino-acid sequence, 453 residues long: Glutamyl-tRNA reductase (453 aa).

Substrate contacts are provided by residues 50–53 (TCNR), Ser-110, 115–117 (EPQ), and Gln-121. Residue Cys-51 is the Nucleophile of the active site. An NADP(+)-binding site is contributed by 190–195 (GAGEMA). Over residues 423-436 (REKVPTDAHADRKP) the composition is skewed to basic and acidic residues. A disordered region spans residues 423–453 (REKVPTDAHADRKPPNFAETSDDFDVTDASE). A compositionally biased stretch (acidic residues) spans 442 to 453 (TSDDFDVTDASE).

This sequence belongs to the glutamyl-tRNA reductase family. As to quaternary structure, homodimer.

The enzyme catalyses (S)-4-amino-5-oxopentanoate + tRNA(Glu) + NADP(+) = L-glutamyl-tRNA(Glu) + NADPH + H(+). It functions in the pathway porphyrin-containing compound metabolism; protoporphyrin-IX biosynthesis; 5-aminolevulinate from L-glutamyl-tRNA(Glu): step 1/2. Catalyzes the NADPH-dependent reduction of glutamyl-tRNA(Glu) to glutamate 1-semialdehyde (GSA). The sequence is that of Glutamyl-tRNA reductase from Solidesulfovibrio magneticus (strain ATCC 700980 / DSM 13731 / RS-1) (Desulfovibrio magneticus).